The following is a 1274-amino-acid chain: Enamelin (1274 aa).

The first 38 residues, 1-38, serve as a signal peptide directing secretion; sequence MLLLQCRNPTSPPKPCGLVPNVKMSLLVFLGLLGVSAA. A compositionally biased stretch (pro residues) spans 103 to 115; sequence PVPNGWQQPPMPN. Disordered regions lie at residues 103-413, 476-610, 668-700, 712-734, and 753-814; these read PVPN…VGAN, IGAN…NNPN, PFQS…KHFP, LPPL…YGSR, and YIKS…EEMN. Positions 117-127 are enriched in polar residues; the sequence is PSKTDQTQETA. Residues 128-142 show a composition bias toward low complexity; it reads KPNQTNPQEPQPQKQ. A glycan (N-linked (GlcNAc...) asparagine) is linked at N130. Basic and acidic residues predominate over residues 143–158; sequence PLKEPPNEAARAKDDA. A compositionally biased stretch (pro residues) spans 174 to 185; sequence YPQPPWPIPQRG. 2 positions are modified to phosphoserine: S196 and S219. Basic and acidic residues predominate over residues 225 to 239; sequence DYEKPKEKDPPKPED. Over residues 249–272 the composition is skewed to polar residues; it reads ASTNSTVPDANATQSIPEGGNDTS. Residues N252, N259, and N269 are each glycosylated (N-linked (GlcNAc...) asparagine). The segment covering 273–287 has biased composition (low complexity); the sequence is PIGNTGPGPNAGNNP. N300 carries an N-linked (GlcNAc...) asparagine glycan. The span at 318–330 shows a compositional bias: low complexity; it reads PNIYENYPYPNYP. 4 stretches are compositionally biased toward polar residues: residues 331–344, 486–503, 522–549, and 565–574; these read SERQ…QGPR, SIGT…TNPA, TNPS…QASN, and VTVSHNMKTQ. Positions 575–587 are enriched in basic and acidic residues; it reads NPKEKSLGQKERT. Polar residues predominate over residues 588-598; the sequence is VTPTKDASNPW. Over residues 715–727 the composition is skewed to basic and acidic residues; it reads LKEDYGRQDENLR. The span at 753–766 shows a compositional bias: polar residues; it reads YIKSNPWDKSSPST. Residues 787–801 show a composition bias toward acidic residues; it reads QYNEEDPIDPNEDES. N1066 carries an N-linked (GlcNAc...) asparagine glycan. Disordered stretches follow at residues 1071-1097 and 1109-1128; these read KLTA…PYSG and SEAS…DLGG.

Phosphorylated by FAM20C in vitro. As to expression, expressed in developing teeth.

The protein localises to the secreted. Its subcellular location is the extracellular space. It localises to the extracellular matrix. Its function is as follows. Involved in the mineralization and structural organization of enamel. Involved in the extension of enamel during the secretory stage of dental enamel formation. This chain is Enamelin (Enam), found in Mus musculus (Mouse).